The chain runs to 227 residues: Cytochrome c oxidase subunit 2 (227 aa).

The Mitochondrial intermembrane portion of the chain corresponds to 1-14; that stretch reads MAYPFQLGLQDATS. A helical transmembrane segment spans residues 15–45; that stretch reads PIMEELLHFHDHTLMIVFLISSLVLYIITLM. Over 46–59 the chain is Mitochondrial matrix; the sequence is LTTKLTHTSTMDAQ. The helical transmembrane segment at 60 to 87 threads the bilayer; that stretch reads EVETVWTILPAIILILIALPSLRILYMM. Residues 88–227 lie on the Mitochondrial intermembrane side of the membrane; sequence DEINNPSLTV…YFETWSAVMV (140 aa). Cu cation contacts are provided by His161, Cys196, Glu198, Cys200, His204, and Met207. Glu198 lines the Mg(2+) pocket. Tyr218 carries the post-translational modification Phosphotyrosine.

It belongs to the cytochrome c oxidase subunit 2 family. In terms of assembly, component of the cytochrome c oxidase (complex IV, CIV), a multisubunit enzyme composed of 14 subunits. The complex is composed of a catalytic core of 3 subunits MT-CO1, MT-CO2 and MT-CO3, encoded in the mitochondrial DNA, and 11 supernumerary subunits COX4I, COX5A, COX5B, COX6A, COX6B, COX6C, COX7A, COX7B, COX7C, COX8 and NDUFA4, which are encoded in the nuclear genome. The complex exists as a monomer or a dimer and forms supercomplexes (SCs) in the inner mitochondrial membrane with NADH-ubiquinone oxidoreductase (complex I, CI) and ubiquinol-cytochrome c oxidoreductase (cytochrome b-c1 complex, complex III, CIII), resulting in different assemblies (supercomplex SCI(1)III(2)IV(1) and megacomplex MCI(2)III(2)IV(2)). Found in a complex with TMEM177, COA6, COX18, COX20, SCO1 and SCO2. Interacts with TMEM177 in a COX20-dependent manner. Interacts with COX20. Interacts with COX16. The cofactor is Cu cation.

It is found in the mitochondrion inner membrane. The enzyme catalyses 4 Fe(II)-[cytochrome c] + O2 + 8 H(+)(in) = 4 Fe(III)-[cytochrome c] + 2 H2O + 4 H(+)(out). In terms of biological role, component of the cytochrome c oxidase, the last enzyme in the mitochondrial electron transport chain which drives oxidative phosphorylation. The respiratory chain contains 3 multisubunit complexes succinate dehydrogenase (complex II, CII), ubiquinol-cytochrome c oxidoreductase (cytochrome b-c1 complex, complex III, CIII) and cytochrome c oxidase (complex IV, CIV), that cooperate to transfer electrons derived from NADH and succinate to molecular oxygen, creating an electrochemical gradient over the inner membrane that drives transmembrane transport and the ATP synthase. Cytochrome c oxidase is the component of the respiratory chain that catalyzes the reduction of oxygen to water. Electrons originating from reduced cytochrome c in the intermembrane space (IMS) are transferred via the dinuclear copper A center (CU(A)) of subunit 2 and heme A of subunit 1 to the active site in subunit 1, a binuclear center (BNC) formed by heme A3 and copper B (CU(B)). The BNC reduces molecular oxygen to 2 water molecules using 4 electrons from cytochrome c in the IMS and 4 protons from the mitochondrial matrix. The protein is Cytochrome c oxidase subunit 2 (MT-CO2) of Vulpes vulpes (Red fox).